Consider the following 610-residue polypeptide: UvrABC system protein C (610 aa).

A GIY-YIG domain is found at 16–94; the sequence is HQPGVYRMYN…IKQYLPKYNV (79 aa). Residues 204–239 enclose the UVR domain; the sequence is QQVLKQLIEKMEVASQQLRFEDAAKFRDQIQAIRRV.

Belongs to the UvrC family. As to quaternary structure, interacts with UvrB in an incision complex.

It localises to the cytoplasm. The UvrABC repair system catalyzes the recognition and processing of DNA lesions. UvrC both incises the 5' and 3' sides of the lesion. The N-terminal half is responsible for the 3' incision and the C-terminal half is responsible for the 5' incision. The polypeptide is UvrABC system protein C (Vibrio parahaemolyticus serotype O3:K6 (strain RIMD 2210633)).